Here is a 100-residue protein sequence, read N- to C-terminus: ESAT-6-like protein EsxT (100 aa).

The protein belongs to the WXG100 family. ESAT-6 subfamily. Forms a tight 1:1 complex with EsxU.

Its subcellular location is the secreted. In Mycobacterium tuberculosis (strain CDC 1551 / Oshkosh), this protein is ESAT-6-like protein EsxT.